The primary structure comprises 590 residues: Aspartate--tRNA(Asp/Asn) ligase (590 aa).

Glu-175 provides a ligand contact to L-aspartate. The interval 199–202 is aspartate; it reads QQYK. L-aspartate contacts are provided by Arg-221 and His-450. 221–223 contributes to the ATP binding site; sequence RDE. Glu-484 is a binding site for ATP. Arg-491 contacts L-aspartate. 536-539 lines the ATP pocket; sequence GVDR.

It belongs to the class-II aminoacyl-tRNA synthetase family. Type 1 subfamily. As to quaternary structure, homodimer.

It localises to the cytoplasm. The enzyme catalyses tRNA(Asx) + L-aspartate + ATP = L-aspartyl-tRNA(Asx) + AMP + diphosphate. Aspartyl-tRNA synthetase with relaxed tRNA specificity since it is able to aspartylate not only its cognate tRNA(Asp) but also tRNA(Asn). Reaction proceeds in two steps: L-aspartate is first activated by ATP to form Asp-AMP and then transferred to the acceptor end of tRNA(Asp/Asn). This is Aspartate--tRNA(Asp/Asn) ligase from Nitrobacter hamburgensis (strain DSM 10229 / NCIMB 13809 / X14).